A 195-amino-acid chain; its full sequence is HTH-type transcriptional regulator BetI (195 aa).

The HTH tetR-type domain maps to 8-68; the sequence is SIRRRQLIDA…ATMRDITSQL (61 aa). Positions 31-50 form a DNA-binding region, H-T-H motif; sequence TIAQIARRAGVSTGIISHYF.

Its pathway is amine and polyamine biosynthesis; betaine biosynthesis via choline pathway [regulation]. Repressor involved in the biosynthesis of the osmoprotectant glycine betaine. It represses transcription of the choline transporter BetT and the genes of BetAB involved in the synthesis of glycine betaine. The sequence is that of HTH-type transcriptional regulator BetI from Escherichia coli O17:K52:H18 (strain UMN026 / ExPEC).